A 126-amino-acid chain; its full sequence is MPKHNKLLGAFGEAYAARWLATRGYIIITRNWRRATGEIDIIAQQDDTIVFVEVKTLRCTSYADLAIIVGKRKQKRICETAKHFLASAREYNHMCARFDVIVLRSDPFRRQDVDIVHLPHAFEDLV.

Belongs to the UPF0102 family.

The polypeptide is UPF0102 protein TP_0913 (Treponema pallidum (strain Nichols)).